Consider the following 132-residue polypeptide: Interleukin-5 (132 aa).

Positions 1–17 are cleaved as a signal peptide; it reads MRLPLQLSILTLAWVWA. Residues Asn-45, Asn-74, and Asn-88 are each glycosylated (N-linked (GlcNAc...) asparagine).

It belongs to the IL-5 family. In terms of assembly, homodimer; disulfide-linked. Interacts with IL5RA. Interacts with CSF2RB.

The protein resides in the secreted. In terms of biological role, homodimeric cytokine expressed predominantly by T-lymphocytes and NK cells that plays an important role in the survival, differentiation, and chemotaxis of eosinophils. Also acts on activated and resting B-cells to induce immunoglobulin production, growth, and differentiation. Mechanistically, exerts its biological effects through a receptor composed of IL5RA subunit and the cytokine receptor common subunit beta/CSF2RB. Binding to the receptor leads to activation of various kinases including LYN, SYK and JAK2 and thereby propagates signals through the RAS-MAPK and JAK-STAT5 pathways respectively. This is Interleukin-5 (IL5) from Meriones unguiculatus (Mongolian jird).